We begin with the raw amino-acid sequence, 171 residues long: Neudesin (171 aa).

The first 30 residues, 1–30 (MARPAPWWWLRPLAALALALALVRVPSARA), serve as a signal peptide directing secretion. The Cytochrome b5 heme-binding domain maps to 43–128 (VRLFTEEELA…KELEALDDIF (86 aa)). An N6-acetyllysine modification is found at K135. The segment at 151–171 (GSPNLDFKPEDQPHFDIKDEF) is disordered. Over residues 157-171 (FKPEDQPHFDIKDEF) the composition is skewed to basic and acidic residues.

Belongs to the cytochrome b5 family. MAPR subfamily. As to quaternary structure, interacts with PINK1 and PARK7.

The protein localises to the secreted. Its subcellular location is the extracellular space. It is found in the mitochondrion. It localises to the endoplasmic reticulum. Its function is as follows. Acts as a neurotrophic factor in postnatal mature neurons enhancing neuronal survival. Promotes cell proliferation and neurogenesis in undifferentiated neural progenitor cells at the embryonic stage and inhibits differentiation of astrocytes. Its neurotrophic activity is exerted via MAPK1/ERK2, MAPK3/ERK1 and AKT1/AKT pathways. Neurotrophic activity is enhanced by binding to heme. Also acts as an anorexigenic neurotrophic factor that contributes to energy balance. The polypeptide is Neudesin (Rattus norvegicus (Rat)).